The chain runs to 505 residues: MKHMSIRAEEISALIKQQIENYQSEIEVSDVGTVIQVGDGIARAHGLDNVMAGELVEFSNGVMGLAQNLEENNVGIIILGPYTEIREGDEVRRTGRIMQVPVGKELIGRVVNPLGQPVDGLGPINTTNTRPIESPAPGVMDRKSVHEPLQTGIKAIDALVPIGRGQRELIIGDRQTGKTAVALDTIINQKDEDMICIYVAIGQKESTVRNVVETLRKHGALEYTIVVTASASQPAPLLYLAPYAGVTMGEEFMYNGKHVLVVYDDLSKQAAAYRELSLLLRRPPGREAYPGDVFYLHSRLLERAAKLSDAKGGGSLTALPFIETQAGDVSAYIPTNVISITDGQIFLQSDLFFSGVRPAIDAGTSVSRVGGSAQIKAMSKVSGTLRLDLASYRELEAFAQFGSDLDKATQAKLNRGARTVEVLKQGLHKPLRVEKQVIILYALTRGFLDDIPVVDITRFEEEFHAWLDSNATDLLEEIRTTKKLADDDKFAAAINGFKKVFVASE.

The tract at residues 118–138 (VDGLGPINTTNTRPIESPAPG) is disordered. 172 to 179 (GDRQTGKT) contributes to the ATP binding site.

This sequence belongs to the ATPase alpha/beta chains family. F-type ATPases have 2 components, CF(1) - the catalytic core - and CF(0) - the membrane proton channel. CF(1) has five subunits: alpha(3), beta(3), gamma(1), delta(1), epsilon(1). CF(0) has three main subunits: a(1), b(2) and c(9-12). The alpha and beta chains form an alternating ring which encloses part of the gamma chain. CF(1) is attached to CF(0) by a central stalk formed by the gamma and epsilon chains, while a peripheral stalk is formed by the delta and b chains.

The protein localises to the cell membrane. It carries out the reaction ATP + H2O + 4 H(+)(in) = ADP + phosphate + 5 H(+)(out). In terms of biological role, produces ATP from ADP in the presence of a proton gradient across the membrane. The alpha chain is a regulatory subunit. The polypeptide is ATP synthase subunit alpha (Bacillus cereus (strain ATCC 14579 / DSM 31 / CCUG 7414 / JCM 2152 / NBRC 15305 / NCIMB 9373 / NCTC 2599 / NRRL B-3711)).